The following is a 320-amino-acid chain: Methionyl-tRNA formyltransferase (320 aa).

111–114 (SLLP) contributes to the (6S)-5,6,7,8-tetrahydrofolate binding site.

Belongs to the Fmt family.

The catalysed reaction is L-methionyl-tRNA(fMet) + (6R)-10-formyltetrahydrofolate = N-formyl-L-methionyl-tRNA(fMet) + (6S)-5,6,7,8-tetrahydrofolate + H(+). In terms of biological role, attaches a formyl group to the free amino group of methionyl-tRNA(fMet). The formyl group appears to play a dual role in the initiator identity of N-formylmethionyl-tRNA by promoting its recognition by IF2 and preventing the misappropriation of this tRNA by the elongation apparatus. This is Methionyl-tRNA formyltransferase from Pediococcus pentosaceus (strain ATCC 25745 / CCUG 21536 / LMG 10740 / 183-1w).